Reading from the N-terminus, the 163-residue chain is Putative ribose 5-phosphate isomerase (163 aa).

16-17 lines the D-ribulose 5-phosphate pocket; sequence DD. The active-site Proton acceptor is C76. D-ribulose 5-phosphate contacts are provided by residues 77–81, N110, R120, and K148; that span reads GTGLG.

This sequence belongs to the LacAB/RpiB family. As to quaternary structure, homodimer or homotetramer.

In Coccidioides immitis (strain RS) (Valley fever fungus), this protein is Putative ribose 5-phosphate isomerase.